The following is a 149-amino-acid chain: MADQLTEEQIAEFKEAFSLFDKDGDGTITTKELGTVMRSLGQNPTEAELQDMINEVDADGNGTIDFPEFLTMMARKMKDTDSEEEIIEAFKVFDKDGNGFISAAELRHIMTNLGEKLTDEEVDEMIREADIDGDGQINYEEFVKMMMAK.

N-acetylalanine is present on alanine 2. EF-hand domains follow at residues 8–43, 44–79, 81–116, and 117–149; these read EQIA…LGQN, PTEA…KMKD, DSEE…LGEK, and LTDE…MMAK. Positions 21, 23, 25, 27, 32, 57, 59, 61, 63, 68, 94, 96, 98, and 105 each coordinate Ca(2+). Lysine 116 is subject to N6,N6,N6-trimethyllysine. Residues aspartate 130, aspartate 132, aspartate 134, glutamine 136, and glutamate 141 each coordinate Ca(2+).

Belongs to the calmodulin family.

Functionally, calmodulin mediates the control of a large number of enzymes, ion channels and other proteins by Ca(2+). Among the enzymes to be stimulated by the calmodulin-Ca(2+) complex are a number of protein kinases and phosphatases. The sequence is that of Calmodulin from Macrocystis pyrifera (Giant kelp).